We begin with the raw amino-acid sequence, 164 residues long: Large ribosomal subunit protein uL10 (164 aa).

Belongs to the universal ribosomal protein uL10 family. In terms of assembly, part of the ribosomal stalk of the 50S ribosomal subunit. The N-terminus interacts with L11 and the large rRNA to form the base of the stalk. The C-terminus forms an elongated spine to which L12 dimers bind in a sequential fashion forming a multimeric L10(L12)X complex.

Functionally, forms part of the ribosomal stalk, playing a central role in the interaction of the ribosome with GTP-bound translation factors. The polypeptide is Large ribosomal subunit protein uL10 (Aliivibrio fischeri (strain MJ11) (Vibrio fischeri)).